Consider the following 104-residue polypeptide: Large ribosomal subunit protein uL24 (104 aa).

This sequence belongs to the universal ribosomal protein uL24 family. Part of the 50S ribosomal subunit.

One of two assembly initiator proteins, it binds directly to the 5'-end of the 23S rRNA, where it nucleates assembly of the 50S subunit. Functionally, one of the proteins that surrounds the polypeptide exit tunnel on the outside of the subunit. The polypeptide is Large ribosomal subunit protein uL24 (Neorickettsia sennetsu (strain ATCC VR-367 / Miyayama) (Ehrlichia sennetsu)).